The following is a 124-amino-acid chain: V-type proton ATPase subunit F (124 aa).

The protein belongs to the V-ATPase F subunit family. V-ATPase is a heteromultimeric enzyme composed of a peripheral catalytic V1 complex (components A to H) attached to an integral membrane V0 proton pore complex (components: a, c, c', c'', d, e, f and VOA1).

Its subcellular location is the vacuole membrane. Its function is as follows. Subunit of the V1 complex of vacuolar(H+)-ATPase (V-ATPase), a multisubunit enzyme composed of a peripheral complex (V1) that hydrolyzes ATP and a membrane integral complex (V0) that translocates protons. V-ATPase is responsible for acidifying and maintaining the pH of intracellular compartments. In Neosartorya fischeri (strain ATCC 1020 / DSM 3700 / CBS 544.65 / FGSC A1164 / JCM 1740 / NRRL 181 / WB 181) (Aspergillus fischerianus), this protein is V-type proton ATPase subunit F (vma7).